The chain runs to 479 residues: 6-phosphogluconate dehydrogenase, decarboxylating (479 aa).

Residues 9–14 (GLGVMG), 32–34 (NRT), 77–79 (VQA), and Asn105 contribute to the NADP(+) site. Substrate contacts are provided by residues Asn105 and 131-133 (SGG). The Proton acceptor role is filled by Lys186. A substrate-binding site is contributed by 189–190 (HN). The active-site Proton donor is the Glu193. Substrate contacts are provided by Tyr194, Lys263, Arg290, Arg454, and His460.

The protein belongs to the 6-phosphogluconate dehydrogenase family. As to quaternary structure, homodimer.

It catalyses the reaction 6-phospho-D-gluconate + NADP(+) = D-ribulose 5-phosphate + CO2 + NADPH. The protein operates within carbohydrate degradation; pentose phosphate pathway; D-ribulose 5-phosphate from D-glucose 6-phosphate (oxidative stage): step 3/3. Its function is as follows. Catalyzes the oxidative decarboxylation of 6-phosphogluconate to ribulose 5-phosphate and CO(2), with concomitant reduction of NADP to NADPH. This chain is 6-phosphogluconate dehydrogenase, decarboxylating (GND), found in Trypanosoma brucei brucei.